Reading from the N-terminus, the 605-residue chain is Granule-bound starch synthase 1, chloroplastic/amyloplastic (605 aa).

Residues 1–72 (MAALATSQLV…GGRFPSLVVC (72 aa)) constitute a chloroplast transit peptide. Residue lysine 91 coordinates ADP-alpha-D-glucose.

The protein belongs to the glycosyltransferase 1 family. Bacterial/plant glycogen synthase subfamily.

It is found in the plastid. Its subcellular location is the chloroplast. The protein resides in the amyloplast. It carries out the reaction an NDP-alpha-D-glucose + [(1-&gt;4)-alpha-D-glucosyl](n) = [(1-&gt;4)-alpha-D-glucosyl](n+1) + a ribonucleoside 5'-diphosphate + H(+). It functions in the pathway glycan biosynthesis; starch biosynthesis. Functionally, required for the synthesis of amylose in endosperm. The sequence is that of Granule-bound starch synthase 1, chloroplastic/amyloplastic (WAXY) from Zea mays (Maize).